The sequence spans 1252 residues: LRR receptor-like serine/threonine-protein kinase GSO2 (1252 aa).

A signal peptide spans 1–22; it reads MQQNSVLLALFFLCFSSGLGSG. Topologically, residues 23-876 are extracellular; it reads QPGQRDDLQT…QRSLSPKTVV (854 aa). 3 N-linked (GlcNAc...) asparagine glycosylation sites follow: N62, N77, and N117. 10 LRR repeats span residues 94–118, 120–143, 144–166, 168–190, 191–215, 217–239, 240–263, 265–286, 287–310, and 312–335; these read FNNL…LSNL, SSLE…LGSL, VNLK…TFGN, VNLQ…RFGR, LVQL…IGNC, SLAL…LNRL, KNLQ…LGDL, SIQY…RLTE, LANL…EFWR, and NQLE…ICSN. N-linked (GlcNAc...) asparagine glycosylation occurs at N157. N214 and N229 each carry an N-linked (GlcNAc...) asparagine glycan. N299 is a glycosylation site (N-linked (GlcNAc...) asparagine). N336 is a glycosylation site (N-linked (GlcNAc...) asparagine). LRR repeat units follow at residues 337-360, 361-384, 386-408, 409-433, 435-456, 457-480, 481-504, 506-528, 529-552, 554-575, 577-599, 600-622, 623-648, 650-670, 671-695, 697-719, 720-743, 745-767, 768-792, 793-816, and 818-839; these read TSLK…ISNC, QSLK…LFQL, ELTN…ISNL, TNLQ…GFLG, LEIM…IGNC, TRLQ…IGRL, KDLT…LGNC, QMTV…FGFL, TALE…LINL, NLTR…LCGS, SYLS…LGKS, TNLD…TFGK, ISEL…GLCK, LTHI…WLGK, LPLL…IFSL, NILT…IGNL, QALN…IGKL, KLFE…IGQL, QDLQ…ISTL, PKLE…IGDM, and SLGY…QFSR. N-linked (GlcNAc...) asparagine glycosylation is found at N370, N394, and N407. N455 is a glycosylation site (N-linked (GlcNAc...) asparagine). N538, N554, N559, and N566 each carry an N-linked (GlcNAc...) asparagine glycan. Residue N709 is glycosylated (N-linked (GlcNAc...) asparagine). An N-linked (GlcNAc...) asparagine glycan is attached at N780. N823 carries N-linked (GlcNAc...) asparagine glycosylation. Residues 877 to 897 traverse the membrane as a helical segment; that stretch reads IISAISSLAAIALMVLVIILF. Topologically, residues 898–1252 are cytoplasmic; the sequence is FKQNHDLFKK…YREMQTDTDK (355 aa). Residue T945 is modified to Phosphothreonine. Positions 948 to 1232 constitute a Protein kinase domain; sequence LNEEFMIGSG…PSSRQASEYL (285 aa). ATP contacts are provided by residues 954 to 962 and K976; that span reads IGSGGSGKV. Phosphotyrosine is present on residues Y1024 and Y1066. D1079 functions as the Proton acceptor in the catalytic mechanism. The residue at position 1114 (S1114) is a Phosphoserine. 2 positions are modified to phosphotyrosine: Y1124 and Y1131.

It belongs to the protein kinase superfamily. Ser/Thr protein kinase family. Interacts with CIF1 and CIF2. In terms of tissue distribution, mostly expressed in siliques, seeds, developing embryos and seedlings, detected in flower buds, but not in roots, leaves or stems.

It localises to the cell membrane. It carries out the reaction L-seryl-[protein] + ATP = O-phospho-L-seryl-[protein] + ADP + H(+). It catalyses the reaction L-threonyl-[protein] + ATP = O-phospho-L-threonyl-[protein] + ADP + H(+). Functionally, together with GSO1, receptor-like serine/threonine-kinase required during the development of the epidermal surface in embryos and cotyledons. Involved in the nuclear division phase of megagametogenesis. In coordination with GSO2, regulates root growth through control of cell division and cell fate specification. Controls seedling root growth by modulating sucrose response after germination. Receptor of the peptide hormones CIF1 and CIF2 required for contiguous Casparian strip diffusion barrier formation in roots. In Arabidopsis thaliana (Mouse-ear cress), this protein is LRR receptor-like serine/threonine-protein kinase GSO2.